A 357-amino-acid chain; its full sequence is 3-isopropylmalate dehydrogenase (357 aa).

76–89 (GPQWDTIDPALRPE) lines the NAD(+) pocket. 4 residues coordinate substrate: arginine 96, arginine 106, arginine 134, and aspartate 224. Aspartate 224, aspartate 248, and aspartate 252 together coordinate Mg(2+). 282–294 (GSAPDIAGKGIAN) contacts NAD(+).

It belongs to the isocitrate and isopropylmalate dehydrogenases family. LeuB type 1 subfamily. Homodimer. It depends on Mg(2+) as a cofactor. Mn(2+) is required as a cofactor.

It is found in the cytoplasm. The catalysed reaction is (2R,3S)-3-isopropylmalate + NAD(+) = 4-methyl-2-oxopentanoate + CO2 + NADH. It functions in the pathway amino-acid biosynthesis; L-leucine biosynthesis; L-leucine from 3-methyl-2-oxobutanoate: step 3/4. Catalyzes the oxidation of 3-carboxy-2-hydroxy-4-methylpentanoate (3-isopropylmalate) to 3-carboxy-4-methyl-2-oxopentanoate. The product decarboxylates to 4-methyl-2 oxopentanoate. The chain is 3-isopropylmalate dehydrogenase from Xanthomonas axonopodis pv. citri (strain 306).